The chain runs to 412 residues: 43 kDa receptor-associated protein of the synapse (412 aa).

A lipid anchor (N-myristoyl glycine) is attached at Gly-2. 7 TPR repeats span residues 6–39 (TKQQIEKGLQLYQANETGKALEIWQQVVERSTEL), 83–116 (TEAYLNLARGHEKLCEFSEAVAYCRTCLGAEGGP), 123–156 (GQVCLSMGNAFLGLSAFQKALECFEKALRYAHGN), 163–196 (CRVCCSLGAFYVQLKDYEKALFFPCKSAELVADY), 206–239 (AMSRYHMAAAYRKLGRMDDAMECCEESMKIALQH), 246–279 (ALCLLCFADIHRHRSDIGKALPRYESSLNIMTEI), and 286–319 (AHVLLNIAKCWMTEKKLDKTLGVVQKAEELADAV). Tyr-196 is modified (phosphotyrosine). An RING-type zinc finger spans residues 363–403 (CGLCGESIGDQNSQLQALPCSHLFHLKCLQTNGNRGCPNCK). Ser-405 is modified (phosphoserine).

Belongs to the RAPsyn family.

The protein resides in the cell membrane. Its subcellular location is the postsynaptic cell membrane. It is found in the cytoplasm. The protein localises to the cytoskeleton. Its function is as follows. Postsynaptic protein required for clustering of nicotinic acetylcholine receptors (nAChRs) at the neuromuscular junction. It may link the receptor to the underlying postsynaptic cytoskeleton, possibly by direct association with actin or spectrin. The sequence is that of 43 kDa receptor-associated protein of the synapse (RAPSN) from Tetronarce californica (Pacific electric ray).